We begin with the raw amino-acid sequence, 184 residues long: PXMP2/4 family protein 3 (184 aa).

A signal peptide spans 1-44 (MSNSKPLSLTDAVTTWYMKKLKSKPIQTKALTSATLSFISSVVA). The next 3 membrane-spanning stretches (helical) occupy residues 58–78 (VVKF…WHII), 97–117 (IVDQ…VLAI), and 159–179 (LRVL…SILA).

It belongs to the peroxisomal membrane protein PXMP2/4 family.

Its subcellular location is the membrane. The protein is PXMP2/4 family protein 3 of Dictyostelium discoideum (Social amoeba).